The chain runs to 338 residues: Glyceraldehyde-3-phosphate dehydrogenase (338 aa).

Residues 11 to 12 (TI) and Gly-111 each bind NAD(+). 140–142 (SCN) contributes to the D-glyceraldehyde 3-phosphate binding site. Cys-141 functions as the Nucleophile in the catalytic mechanism. Arg-169 contributes to the NAD(+) binding site. Residue 195-196 (HG) coordinates D-glyceraldehyde 3-phosphate. Gln-302 contributes to the NAD(+) binding site.

The protein belongs to the glyceraldehyde-3-phosphate dehydrogenase family. Homotetramer.

Its subcellular location is the cytoplasm. It catalyses the reaction D-glyceraldehyde 3-phosphate + phosphate + NADP(+) = (2R)-3-phospho-glyceroyl phosphate + NADPH + H(+). It carries out the reaction D-glyceraldehyde 3-phosphate + phosphate + NAD(+) = (2R)-3-phospho-glyceroyl phosphate + NADH + H(+). It functions in the pathway carbohydrate degradation; glycolysis; pyruvate from D-glyceraldehyde 3-phosphate: step 1/5. This is Glyceraldehyde-3-phosphate dehydrogenase (gap) from Methanobacterium bryantii.